The following is a 414-amino-acid chain: Serine/threonine transporter SstT (414 aa).

Helical transmembrane passes span 22-42 (GLVL…TIGF), 54-74 (IFVK…VMAA), 89-109 (IIVL…IAGF), 148-168 (AIFK…GLAL), 189-209 (IVHV…AETL), 223-243 (LLAV…PILV), 305-325 (MAGA…TLGL), and 337-357 (IVAA…LLLI).

This sequence belongs to the dicarboxylate/amino acid:cation symporter (DAACS) (TC 2.A.23) family.

It localises to the cell inner membrane. The enzyme catalyses L-serine(in) + Na(+)(in) = L-serine(out) + Na(+)(out). It carries out the reaction L-threonine(in) + Na(+)(in) = L-threonine(out) + Na(+)(out). Its function is as follows. Involved in the import of serine and threonine into the cell, with the concomitant import of sodium (symport system). This Haemophilus influenzae (strain 86-028NP) protein is Serine/threonine transporter SstT.